A 355-amino-acid chain; its full sequence is Serum paraoxonase/arylesterase 1 (355 aa).

Cys42 and Cys353 are joined by a disulfide. 2 residues coordinate Ca(2+): Glu53 and Asp54. The active-site Proton acceptor is the His115. Ca(2+) is bound by residues Ile117, Asn168, Asp169, and Asn224. Asn253 carries N-linked (GlcNAc...) asparagine glycosylation. Asp269 and Asn270 together coordinate Ca(2+). Residues Asn270 and Asn324 are each glycosylated (N-linked (GlcNAc...) asparagine).

Belongs to the paraoxonase family. Homodimer. Heterooligomer with phosphate-binding protein (HPBP). Interacts with CLU. Ca(2+) serves as cofactor. Post-translationally, glycosylated. The signal sequence is not cleaved. In terms of processing, present in two forms, form B contains a disulfide bond, form A does not. In terms of tissue distribution, plasma, associated with HDL (at protein level). Expressed in liver, but not in heart, brain, placenta, lung, skeletal muscle, kidney or pancreas.

It localises to the secreted. It is found in the extracellular space. The catalysed reaction is a phenyl acetate + H2O = a phenol + acetate + H(+). It catalyses the reaction An aryl dialkyl phosphate + H2O = dialkyl phosphate + an aryl alcohol.. It carries out the reaction an N-acyl-L-homoserine lactone + H2O = an N-acyl-L-homoserine + H(+). Its function is as follows. Hydrolyzes the toxic metabolites of a variety of organophosphorus insecticides. Capable of hydrolyzing a broad spectrum of organophosphate substrates and lactones, and a number of aromatic carboxylic acid esters. Mediates an enzymatic protection of low density lipoproteins against oxidative modification and the consequent series of events leading to atheroma formation. The polypeptide is Serum paraoxonase/arylesterase 1 (PON1) (Homo sapiens (Human)).